The primary structure comprises 734 residues: Photosystem I P700 chlorophyll a apoprotein A2 (734 aa).

The next 8 membrane-spanning stretches (helical) occupy residues 46–69 (IFASHFGQLAIIFLWTSGNLFHVA), 135–158 (LYNGALFLLFISAISLIAGWLHLQ), 175–199 (LNHHLSGLFGVSSLAWTGHLVHVAI), 273–291 (IAHHHLAIAFIFLIAGHMY), 330–353 (IHFQLGLALASLGVITSLVAQHMY), 369–395 (AALYTHHQYIAGFIMTGAFAHGAIFFI), 417–439 (AIISHLSWASLFLGFHTLGLYVH), and 517–535 (FLVHHAIALGLHTTTLILV). Cys559 and Cys568 together coordinate [4Fe-4S] cluster. 2 consecutive transmembrane segments (helical) span residues 575–596 (AFYLAVFWMLNTIGWVTFYWHW) and 643–665 (LSVWAWMFLFGHLVWATGFMFLI). Residues His654, Met662, and Tyr670 each contribute to the chlorophyll a site. Position 671 (Trp671) interacts with phylloquinone. A helical membrane pass occupies residues 707–727 (LVGLAHFSVGYIFTYAAFLIA).

This sequence belongs to the PsaA/PsaB family. In terms of assembly, the PsaA/B heterodimer binds the P700 chlorophyll special pair and subsequent electron acceptors. PSI consists of a core antenna complex that captures photons, and an electron transfer chain that converts photonic excitation into a charge separation. The eukaryotic PSI reaction center is composed of at least 11 subunits. P700 is a chlorophyll a/chlorophyll a' dimer, A0 is one or more chlorophyll a, A1 is one or both phylloquinones and FX is a shared 4Fe-4S iron-sulfur center. is required as a cofactor.

The protein resides in the plastid. Its subcellular location is the chloroplast thylakoid membrane. It carries out the reaction reduced [plastocyanin] + hnu + oxidized [2Fe-2S]-[ferredoxin] = oxidized [plastocyanin] + reduced [2Fe-2S]-[ferredoxin]. Functionally, psaA and PsaB bind P700, the primary electron donor of photosystem I (PSI), as well as the electron acceptors A0, A1 and FX. PSI is a plastocyanin-ferredoxin oxidoreductase, converting photonic excitation into a charge separation, which transfers an electron from the donor P700 chlorophyll pair to the spectroscopically characterized acceptors A0, A1, FX, FA and FB in turn. Oxidized P700 is reduced on the lumenal side of the thylakoid membrane by plastocyanin. This Morus indica (Mulberry) protein is Photosystem I P700 chlorophyll a apoprotein A2.